Here is a 251-residue protein sequence, read N- to C-terminus: Triosephosphate isomerase (251 aa).

9–11 (NWK) is a binding site for substrate. Catalysis depends on histidine 95, which acts as the Electrophile. Catalysis depends on glutamate 167, which acts as the Proton acceptor. Residues glycine 173, serine 213, and 234-235 (GG) each bind substrate. Serine 213 is modified (phosphoserine).

Belongs to the triosephosphate isomerase family. In terms of assembly, homodimer.

It localises to the cytoplasm. It catalyses the reaction D-glyceraldehyde 3-phosphate = dihydroxyacetone phosphate. Its pathway is carbohydrate biosynthesis; gluconeogenesis. It functions in the pathway carbohydrate degradation; glycolysis; D-glyceraldehyde 3-phosphate from glycerone phosphate: step 1/1. Its function is as follows. Involved in the gluconeogenesis. Catalyzes stereospecifically the conversion of dihydroxyacetone phosphate (DHAP) to D-glyceraldehyde-3-phosphate (G3P). The sequence is that of Triosephosphate isomerase from Anoxybacillus flavithermus (strain DSM 21510 / WK1).